The following is a 326-amino-acid chain: Phospho-N-acetylmuramoyl-pentapeptide-transferase (326 aa).

9 consecutive transmembrane segments (helical) span residues 3 to 23 (ISIS…PAFI), 51 to 71 (TMGG…FALF), 79 to 99 (VGMI…DDFL), 115 to 135 (LALQ…GGDI), 138 to 158 (VFGY…FWLV), 169 to 189 (GVDG…GVIA), 195 to 215 (MDIL…FIFN), 221 to 243 (VFMG…MALH), and 306 to 326 (FFFW…LYLM).

The protein belongs to the glycosyltransferase 4 family. MraY subfamily. The cofactor is Mg(2+).

It is found in the cell membrane. It catalyses the reaction UDP-N-acetyl-alpha-D-muramoyl-L-alanyl-gamma-D-glutamyl-L-lysyl-D-alanyl-D-alanine + di-trans,octa-cis-undecaprenyl phosphate = Mur2Ac(oyl-L-Ala-gamma-D-Glu-L-Lys-D-Ala-D-Ala)-di-trans,octa-cis-undecaprenyl diphosphate + UMP. It participates in cell wall biogenesis; peptidoglycan biosynthesis. Its function is as follows. Catalyzes the initial step of the lipid cycle reactions in the biosynthesis of the cell wall peptidoglycan: transfers peptidoglycan precursor phospho-MurNAc-pentapeptide from UDP-MurNAc-pentapeptide onto the lipid carrier undecaprenyl phosphate, yielding undecaprenyl-pyrophosphoryl-MurNAc-pentapeptide, known as lipid I. In Streptococcus pneumoniae serotype 19F (strain G54), this protein is Phospho-N-acetylmuramoyl-pentapeptide-transferase.